Consider the following 58-residue polypeptide: Mesomartoxin (58 aa).

The first 29 residues, 1 to 29, serve as a signal peptide directing secretion; that stretch reads MMSRLSVFILIALVLSVIIDVLNNSKVEG. 3 cysteine pairs are disulfide-bonded: C31–C49, C35–C54, and C39–C56.

This sequence belongs to the short scorpion toxin superfamily. Potassium channel inhibitor family. Alpha-KTx 26 subfamily. As to expression, expressed by the venom gland.

Its subcellular location is the secreted. Functionally, recombinant toxin that reversibly blocks the voltage-gated potassium channels Shaker (IC(50)=0.054 nM), rKv1.2/KCNA2 (IC(50)=15.6 nM), and rKv1.3/KCNA3 (IC(50)=12.5 uM). This Olivierus martensii (Manchurian scorpion) protein is Mesomartoxin.